The chain runs to 92 residues: FMRFamide-like neuropeptides 5 (92 aa).

The propeptide occupies 1–41 (MSSRSTTIAFLFIATLLVFQCVSAQSSAEDADYLEKYQRIA). Residues Phe51 and Phe61 each carry the phenylalanine amide modification. Residues 64–82 (SRNTWEDGYASPSVNELYV) constitute a propeptide that is removed on maturation. Phe91 bears the Phenylalanine amide mark.

The protein belongs to the FARP (FMRFamide related peptide) family. Each flp gene is expressed in a distinct set of neurons. Flp-5 is expressed in the ASE sensory neurons, the 14 and M4 cholinergic pharyngeal motoneurons, and the PVT and RMG neurons. It is weakly expressed in the PB and 12 neurons. Also expressed in pharyngeal muscle.

The protein resides in the secreted. FMRFamides and FMRFamide-like peptides are neuropeptides. GAKFIRF-amide has an excitatory effect on dissected pharyngeal myogenic muscle system. The chain is FMRFamide-like neuropeptides 5 from Caenorhabditis elegans.